The primary structure comprises 259 residues: Type III pantothenate kinase (259 aa).

D9 to K16 is an ATP binding site. Substrate is bound by residues Y93 and G100–R103. D102 functions as the Proton acceptor in the catalytic mechanism. T126 is a binding site for ATP. T190 contributes to the substrate binding site.

This sequence belongs to the type III pantothenate kinase family. Homodimer. NH4(+) serves as cofactor. It depends on K(+) as a cofactor.

Its subcellular location is the cytoplasm. The catalysed reaction is (R)-pantothenate + ATP = (R)-4'-phosphopantothenate + ADP + H(+). The protein operates within cofactor biosynthesis; coenzyme A biosynthesis; CoA from (R)-pantothenate: step 1/5. Its function is as follows. Catalyzes the phosphorylation of pantothenate (Pan), the first step in CoA biosynthesis. In Burkholderia pseudomallei (strain K96243), this protein is Type III pantothenate kinase.